The primary structure comprises 451 residues: Phenylalanine--tRNA ligase, mitochondrial (451 aa).

Residues 157–160, R179, 186–188, and 193–195 contribute to the substrate site; these read SAHQ, QHY, and QLE. Residue K202 is modified to N6-acetyllysine. Residues E287 and F312 each contribute to the substrate site. Residues 358-450 enclose the FDX-ACB domain; the sequence is SKYPAVINDI…AVQLLGVEGR (93 aa).

It belongs to the class-II aminoacyl-tRNA synthetase family. In terms of assembly, monomer.

The protein localises to the mitochondrion matrix. It localises to the mitochondrion. The catalysed reaction is tRNA(Phe) + L-phenylalanine + ATP = L-phenylalanyl-tRNA(Phe) + AMP + diphosphate + H(+). Is responsible for the charging of tRNA(Phe) with phenylalanine in mitochondrial translation. To a lesser extent, also catalyzes direct attachment of m-Tyr (an oxidized version of Phe) to tRNA(Phe), thereby opening the way for delivery of the misacylated tRNA to the ribosome and incorporation of ROS-damaged amino acid into proteins. The chain is Phenylalanine--tRNA ligase, mitochondrial (FARS2) from Homo sapiens (Human).